Consider the following 295-residue polypeptide: Nucleotide-binding protein Sare_3328 (295 aa).

19 to 26 lines the ATP pocket; the sequence is GVSGGGRS. 70–73 contributes to the GTP binding site; sequence DVRS.

The protein belongs to the RapZ-like family.

Its function is as follows. Displays ATPase and GTPase activities. In Salinispora arenicola (strain CNS-205), this protein is Nucleotide-binding protein Sare_3328.